The chain runs to 475 residues: ATP synthase subunit beta, chloroplastic (475 aa).

155–162 (GGAGVGKT) is an ATP binding site.

Belongs to the ATPase alpha/beta chains family. As to quaternary structure, F-type ATPases have 2 components, CF(1) - the catalytic core - and CF(0) - the membrane proton channel. CF(1) has five subunits: alpha(3), beta(3), gamma(1), delta(1), epsilon(1). CF(0) has four main subunits: a(1), b(1), b'(1) and c(9-12).

It is found in the plastid. It localises to the chloroplast thylakoid membrane. It carries out the reaction ATP + H2O + 4 H(+)(in) = ADP + phosphate + 5 H(+)(out). Produces ATP from ADP in the presence of a proton gradient across the membrane. The catalytic sites are hosted primarily by the beta subunits. In Pyropia yezoensis (Susabi-nori), this protein is ATP synthase subunit beta, chloroplastic.